The primary structure comprises 588 residues: Aspartate--tRNA ligase (588 aa).

Residue E177 participates in L-aspartate binding. Positions 201 to 204 are aspartate; it reads QLFK. R223 contacts L-aspartate. Residues 223-225 and Q232 each bind ATP; that span reads RDE. H451 contributes to the L-aspartate binding site. Residue E485 participates in ATP binding. Residue R492 participates in L-aspartate binding. 537–540 serves as a coordination point for ATP; the sequence is GLDR.

The protein belongs to the class-II aminoacyl-tRNA synthetase family. Type 1 subfamily. As to quaternary structure, homodimer.

It localises to the cytoplasm. The catalysed reaction is tRNA(Asp) + L-aspartate + ATP = L-aspartyl-tRNA(Asp) + AMP + diphosphate. In terms of biological role, catalyzes the attachment of L-aspartate to tRNA(Asp) in a two-step reaction: L-aspartate is first activated by ATP to form Asp-AMP and then transferred to the acceptor end of tRNA(Asp). This chain is Aspartate--tRNA ligase, found in Staphylococcus carnosus (strain TM300).